The primary structure comprises 70 residues: Sec-independent protein translocase protein TatA (70 aa).

The helical transmembrane segment at 1 to 21 threads the bilayer; it reads MFGLGGQELLLILLIILLLFG. The tract at residues 47-70 is disordered; sequence EDEFNKAMSDPPEKKEKESPSDKG. The segment covering 57 to 70 has biased composition (basic and acidic residues); sequence PPEKKEKESPSDKG.

It belongs to the TatA/E family. As to quaternary structure, forms a complex with TatC.

The protein localises to the cell inner membrane. Part of the twin-arginine translocation (Tat) system that transports large folded proteins containing a characteristic twin-arginine motif in their signal peptide across membranes. TatA could form the protein-conducting channel of the Tat system. The polypeptide is Sec-independent protein translocase protein TatA (Prosthecochloris aestuarii (strain DSM 271 / SK 413)).